The sequence spans 134 residues: Transcription factor atoh7 (134 aa).

A disordered region spans residues 1–27 (MKPRRPSCADSGSDSDSRDPEKFESAM). The segment covering 15-27 (SDSRDPEKFESAM) has biased composition (basic and acidic residues). In terms of domain architecture, bHLH spans 28–80 (RRRMAANARERKRMQGLNTAFDRLRKVVPQWGQDKKLSKYETLQMALSYIMAL).

The protein resides in the nucleus. It is found in the perikaryon. The protein localises to the cell projection. Its subcellular location is the axon. In terms of biological role, transcription factor that binds to DNA at the consensus sequence 5'-CAG[GC]TG-3'. Involved in the differentiation of retinal ganglion cells, photoreceptor population and optic nerve development. Required for retinal circadian rhythm photoentrainment. The protein is Transcription factor atoh7 of Danio rerio (Zebrafish).